The sequence spans 1322 residues: Ice nucleation protein InaA (1322 aa).

Residues 162-1281 form an octapeptide periodicity region; sequence ATYGSTLSGT…LTAGENSVLI (1120 aa). 4 stretches are compositionally biased toward polar residues: residues 271–302, 327–350, 373–398, and 423–446; these read SLTA…QKGS, TQTA…QKGS, and GSTQ…QKGS. Disordered stretches follow at residues 271-303, 327-358, 372-399, and 423-448; these read SLTA…KGSD, TQTA…GYGS, YGST…KGSD, and TQTA…GSDL.

The protein belongs to the bacterial ice nucleation protein family.

The protein localises to the cell outer membrane. Functionally, ice nucleation proteins enable bacteria to nucleate crystallization in supercooled water. In Pantoea ananas (Erwinia uredovora), this protein is Ice nucleation protein InaA (inaA).